The primary structure comprises 495 residues: Glycogen synthase (495 aa).

K15 provides a ligand contact to ADP-alpha-D-glucose.

Belongs to the glycosyltransferase 1 family. Bacterial/plant glycogen synthase subfamily.

The catalysed reaction is [(1-&gt;4)-alpha-D-glucosyl](n) + ADP-alpha-D-glucose = [(1-&gt;4)-alpha-D-glucosyl](n+1) + ADP + H(+). The protein operates within glycan biosynthesis; glycogen biosynthesis. Functionally, synthesizes alpha-1,4-glucan chains using ADP-glucose. The polypeptide is Glycogen synthase (Variovorax paradoxus (strain S110)).